The following is a 177-amino-acid chain: Large ribosomal subunit protein uL6 (177 aa).

This sequence belongs to the universal ribosomal protein uL6 family. In terms of assembly, part of the 50S ribosomal subunit.

In terms of biological role, this protein binds to the 23S rRNA, and is important in its secondary structure. It is located near the subunit interface in the base of the L7/L12 stalk, and near the tRNA binding site of the peptidyltransferase center. This Ralstonia pickettii (strain 12J) protein is Large ribosomal subunit protein uL6.